Reading from the N-terminus, the 375-residue chain is Protein NDRG3 (375 aa).

Residues 326 to 375 (RSRTHSASSSGSMEIPRSRSHTSNAQLKSSSNNSLSNQIQETPQTIELSC) are disordered. Low complexity predominate over residues 348–363 (SNAQLKSSSNNSLSNQ). Polar residues predominate over residues 364-375 (IQETPQTIELSC).

This sequence belongs to the NDRG family.

This Xenopus laevis (African clawed frog) protein is Protein NDRG3.